Reading from the N-terminus, the 1017-residue chain is Protein translocase subunit SecA 1 (1017 aa).

ATP-binding positions include Gln-143, 161–165 (GEGKT), and Asp-661. Residues 978 to 999 (GLNDDDEPLPAQPITTEQKPGR) form a disordered region. Zn(2+) is bound by residues Cys-1003, Cys-1005, Cys-1014, and Cys-1015.

Belongs to the SecA family. Monomer and homodimer. Part of the essential Sec protein translocation apparatus which comprises SecA, SecYEG and auxiliary proteins SecDF. Other proteins may also be involved. Zn(2+) serves as cofactor.

Its subcellular location is the cell inner membrane. It localises to the cytoplasm. It carries out the reaction ATP + H2O + cellular proteinSide 1 = ADP + phosphate + cellular proteinSide 2.. Part of the Sec protein translocase complex. Interacts with the SecYEG preprotein conducting channel. Has a central role in coupling the hydrolysis of ATP to the transfer of proteins into and across the cell membrane, serving as an ATP-driven molecular motor driving the stepwise translocation of polypeptide chains across the membrane. The chain is Protein translocase subunit SecA 1 from Chlorobium chlorochromatii (strain CaD3).